The following is an 89-amino-acid chain: Small ribosomal subunit protein uS15 (89 aa).

Basic and acidic residues predominate over residues 1–21; sequence MSLHQERKSELVSKFRTHESD. Residues 1–25 are disordered; it reads MSLHQERKSELVSKFRTHESDTGSP.

This sequence belongs to the universal ribosomal protein uS15 family. Part of the 30S ribosomal subunit. Forms a bridge to the 50S subunit in the 70S ribosome, contacting the 23S rRNA.

In terms of biological role, one of the primary rRNA binding proteins, it binds directly to 16S rRNA where it helps nucleate assembly of the platform of the 30S subunit by binding and bridging several RNA helices of the 16S rRNA. Its function is as follows. Forms an intersubunit bridge (bridge B4) with the 23S rRNA of the 50S subunit in the ribosome. This Myxococcus xanthus (strain DK1622) protein is Small ribosomal subunit protein uS15.